Here is a 333-residue protein sequence, read N- to C-terminus: Homoserine O-succinyltransferase (333 aa).

Cys-147 (acyl-thioester intermediate) is an active-site residue. Substrate-binding residues include Lys-168 and Ser-196. The active-site Proton acceptor is the His-239. The active site involves Glu-241. Residue Arg-253 participates in substrate binding.

This sequence belongs to the MetA family.

It is found in the cytoplasm. It catalyses the reaction L-homoserine + succinyl-CoA = O-succinyl-L-homoserine + CoA. The protein operates within amino-acid biosynthesis; L-methionine biosynthesis via de novo pathway; O-succinyl-L-homoserine from L-homoserine: step 1/1. Transfers a succinyl group from succinyl-CoA to L-homoserine, forming succinyl-L-homoserine. The sequence is that of Homoserine O-succinyltransferase from Rhodopseudomonas palustris.